A 546-amino-acid chain; its full sequence is NAD(P)H-quinone oxidoreductase chain 4 (546 aa).

Transmembrane regions (helical) follow at residues 24–44 (FPWL…IPFF), 56–76 (FALS…INGF), 106–126 (ISMP…LAAW), 132–152 (PKLF…VFAV), 156–176 (LLFF…LAIW), 188–208 (FIIY…AMGF), 232–252 (ILCY…VPLH), 263–283 (TAPV…YALL), 297–317 (FAPL…LTSF), 326–346 (IAYS…SFSS), 352–372 (AMLQ…LVGA), 396–416 (FALW…SGFV), 437–457 (VVMA…LLSM), and 484–504 (VYII…PRLV).

This sequence belongs to the complex I subunit 4 family.

The protein localises to the cellular thylakoid membrane. It carries out the reaction a plastoquinone + NADH + (n+1) H(+)(in) = a plastoquinol + NAD(+) + n H(+)(out). It catalyses the reaction a plastoquinone + NADPH + (n+1) H(+)(in) = a plastoquinol + NADP(+) + n H(+)(out). NDH-1 shuttles electrons from NAD(P)H, via FMN and iron-sulfur (Fe-S) centers, to quinones in the respiratory chain. The immediate electron acceptor for the enzyme in this species is believed to be plastoquinone. Couples the redox reaction to proton translocation (for every two electrons transferred, four hydrogen ions are translocated across the cytoplasmic membrane), and thus conserves the redox energy in a proton gradient. The sequence is that of NAD(P)H-quinone oxidoreductase chain 4 from Prochlorococcus marinus (strain MIT 9515).